A 349-amino-acid chain; its full sequence is NADH-ubiquinone oxidoreductase chain 2 (349 aa).

9 helical membrane-spanning segments follow: residues 3-23, 66-86, 98-118, 139-159, 178-198, 199-219, 240-260, 274-294, and 319-339; these read PYVLTILLSSLGLGTVLTFAS, AAAMILFASTTNAWLVGEWEI, VMLALALKLGLAPVHFWLPEV, FALMIQVAPTINSSLLVTIGL, ILAYLPIAHLGWMVLILQFAP, SLTLLSLSLYIVMTSSAFLTL, LAALTALVLLSLGGLPPLSGF, GLPLSATLAAMTALLSLYFYL, and FTMITLPLSITTIMALGLLPL.

This sequence belongs to the complex I subunit 2 family.

Its subcellular location is the mitochondrion inner membrane. The enzyme catalyses a ubiquinone + NADH + 5 H(+)(in) = a ubiquinol + NAD(+) + 4 H(+)(out). Core subunit of the mitochondrial membrane respiratory chain NADH dehydrogenase (Complex I) that is believed to belong to the minimal assembly required for catalysis. Complex I functions in the transfer of electrons from NADH to the respiratory chain. The immediate electron acceptor for the enzyme is believed to be ubiquinone. This chain is NADH-ubiquinone oxidoreductase chain 2 (MT-ND2), found in Oncorhynchus mykiss (Rainbow trout).